The following is a 488-amino-acid chain: Glutamyl-tRNA(Gln) amidotransferase subunit A (488 aa).

Catalysis depends on charge relay system residues lysine 77 and serine 152. Serine 176 (acyl-ester intermediate) is an active-site residue.

This sequence belongs to the amidase family. GatA subfamily. Heterotrimer of A, B and C subunits.

The catalysed reaction is L-glutamyl-tRNA(Gln) + L-glutamine + ATP + H2O = L-glutaminyl-tRNA(Gln) + L-glutamate + ADP + phosphate + H(+). Functionally, allows the formation of correctly charged Gln-tRNA(Gln) through the transamidation of misacylated Glu-tRNA(Gln) in organisms which lack glutaminyl-tRNA synthetase. The reaction takes place in the presence of glutamine and ATP through an activated gamma-phospho-Glu-tRNA(Gln). The chain is Glutamyl-tRNA(Gln) amidotransferase subunit A from Streptococcus pneumoniae (strain 70585).